A 358-amino-acid chain; its full sequence is Testis-specific serine/threonine-protein kinase 2 (358 aa).

One can recognise a Protein kinase domain in the interval 12-272; the sequence is YIVGINLGKG…IDEILSHSWL (261 aa). Residues 18–26 and lysine 41 each bind ATP; that span reads LGKGSYAKV. The Proton acceptor role is filled by aspartate 136. Basic and acidic residues-rich tracts occupy residues 296–315 and 329–358; these read DCKL…DHKL and NEDR…KAST. The tract at residues 296-358 is disordered; that stretch reads DCKLDTRPGS…SGAEVEKAST (63 aa).

Belongs to the protein kinase superfamily. CAMK Ser/Thr protein kinase family. Interacts with TSSK1B. Interacts with HSP90; this interaction stabilizes TSSK2. Requires Mg(2+) as cofactor. Autophosphorylated. Post-translationally, ubiquitinated; HSP90 activity negatively regulates ubiquitination and degradation. Testis-specific. Expressed only in the spermatids postmeiotically at the final stages of cytodifferentiation in the seminiferous tubules (at protein level). Not detected in released sperms in the lumen of the seminiferous tubules. Also present in the epididymal sperm (at protein level).

Its subcellular location is the cytoplasm. It localises to the cytoskeleton. It is found in the microtubule organizing center. The protein localises to the centrosome. The protein resides in the centriole. Its subcellular location is the cytoplasmic vesicle. It localises to the secretory vesicle. It is found in the acrosome. The catalysed reaction is L-seryl-[protein] + ATP = O-phospho-L-seryl-[protein] + ADP + H(+). The enzyme catalyses L-threonyl-[protein] + ATP = O-phospho-L-threonyl-[protein] + ADP + H(+). Its activity is regulated as follows. Activated by phosphorylation on Thr-174, potentially by autophosphorylation. Its function is as follows. Testis-specific serine/threonine-protein kinase required during spermatid development. Phosphorylates 'Ser-281' of TSKS and SPAG16. Involved in the late stages of spermatogenesis, during the reconstruction of the cytoplasm. During spermatogenesis, required for the transformation of a ring-shaped structure around the base of the flagellum originating from the chromatoid body. The sequence is that of Testis-specific serine/threonine-protein kinase 2 (Tssk2) from Mus musculus (Mouse).